The primary structure comprises 547 residues: Chaperonin GroEL (547 aa).

Residues 30–33 (TLGP), K51, 87–91 (DGTTT), G415, and D495 each bind ATP.

This sequence belongs to the chaperonin (HSP60) family. In terms of assembly, forms a cylinder of 14 subunits composed of two heptameric rings stacked back-to-back. Interacts with the co-chaperonin GroES.

It localises to the cytoplasm. The enzyme catalyses ATP + H2O + a folded polypeptide = ADP + phosphate + an unfolded polypeptide.. Functionally, together with its co-chaperonin GroES, plays an essential role in assisting protein folding. The GroEL-GroES system forms a nano-cage that allows encapsulation of the non-native substrate proteins and provides a physical environment optimized to promote and accelerate protein folding. The chain is Chaperonin GroEL from Bartonella quintana (strain Toulouse) (Rochalimaea quintana).